The sequence spans 483 residues: Probable glycine dehydrogenase (decarboxylating) subunit 2 (483 aa).

The tract at residues 1–24 (MLIFDHSRPGRTAAAQLPATGGDL) is disordered. At Lys264 the chain carries N6-(pyridoxal phosphate)lysine.

Belongs to the GcvP family. C-terminal subunit subfamily. In terms of assembly, the glycine cleavage system is composed of four proteins: P, T, L and H. In this organism, the P 'protein' is a heterodimer of two subunits. It depends on pyridoxal 5'-phosphate as a cofactor.

It carries out the reaction N(6)-[(R)-lipoyl]-L-lysyl-[glycine-cleavage complex H protein] + glycine + H(+) = N(6)-[(R)-S(8)-aminomethyldihydrolipoyl]-L-lysyl-[glycine-cleavage complex H protein] + CO2. The glycine cleavage system catalyzes the degradation of glycine. The P protein binds the alpha-amino group of glycine through its pyridoxal phosphate cofactor; CO(2) is released and the remaining methylamine moiety is then transferred to the lipoamide cofactor of the H protein. The chain is Probable glycine dehydrogenase (decarboxylating) subunit 2 from Thiobacillus denitrificans (strain ATCC 25259 / T1).